We begin with the raw amino-acid sequence, 179 residues long: UPF0227 protein PM0825 (179 aa).

This sequence belongs to the UPF0227 family.

The polypeptide is UPF0227 protein PM0825 (Pasteurella multocida (strain Pm70)).